The following is an 88-amino-acid chain: uncharacterized protein (88 aa).

Residues 39–63 (CEECGAPIPQARREAIPGVRLCIHC) form a dksA C4-type zinc finger.

This is an uncharacterized protein from Escherichia coli (strain K12).